The primary structure comprises 112 residues: UPF0122 protein CPR_1686 (112 aa).

This sequence belongs to the UPF0122 family.

Functionally, might take part in the signal recognition particle (SRP) pathway. This is inferred from the conservation of its genetic proximity to ftsY/ffh. May be a regulatory protein. This is UPF0122 protein CPR_1686 from Clostridium perfringens (strain SM101 / Type A).